A 405-amino-acid chain; its full sequence is Arginine biosynthesis bifunctional protein ArgJ (405 aa).

Residues threonine 152, lysine 178, threonine 189, glutamate 276, asparagine 400, and threonine 405 each contribute to the substrate site. The active-site Nucleophile is threonine 189.

This sequence belongs to the ArgJ family. In terms of assembly, heterotetramer of two alpha and two beta chains.

The protein resides in the cytoplasm. The catalysed reaction is N(2)-acetyl-L-ornithine + L-glutamate = N-acetyl-L-glutamate + L-ornithine. The enzyme catalyses L-glutamate + acetyl-CoA = N-acetyl-L-glutamate + CoA + H(+). It participates in amino-acid biosynthesis; L-arginine biosynthesis; L-ornithine and N-acetyl-L-glutamate from L-glutamate and N(2)-acetyl-L-ornithine (cyclic): step 1/1. The protein operates within amino-acid biosynthesis; L-arginine biosynthesis; N(2)-acetyl-L-ornithine from L-glutamate: step 1/4. Catalyzes two activities which are involved in the cyclic version of arginine biosynthesis: the synthesis of N-acetylglutamate from glutamate and acetyl-CoA as the acetyl donor, and of ornithine by transacetylation between N(2)-acetylornithine and glutamate. This Pseudomonas syringae pv. syringae (strain B728a) protein is Arginine biosynthesis bifunctional protein ArgJ.